The chain runs to 143 residues: Glycine cleavage system H protein 1 (143 aa).

The region spanning 26–107 (IYSVGMASIL…PYSSWIAKLK (82 aa)) is the Lipoyl-binding domain. The residue at position 67 (K67) is an N6-lipoyllysine.

This sequence belongs to the GcvH family. As to quaternary structure, the glycine cleavage system is composed of four proteins: P, T, L and H. The cofactor is (R)-lipoate.

Functionally, the glycine cleavage system catalyzes the degradation of glycine. The H protein shuttles the methylamine group of glycine from the P protein to the T protein. This Aquifex aeolicus (strain VF5) protein is Glycine cleavage system H protein 1.